A 327-amino-acid polypeptide reads, in one-letter code: Complex I intermediate-associated protein 30, mitochondrial (327 aa).

A mitochondrion-targeting transit peptide spans 1-24; sequence MALVHKLLRGTYFLRKFXKPTSAL. Residues 42–63 form a disordered region; that stretch reads PVASPGKASSQRKTEGDLQGDH. The segment covering 53-63 has biased composition (basic and acidic residues); it reads RKTEGDLQGDH. Phosphoserine is present on Ser-318.

Belongs to the CIA30 family. In terms of assembly, part of the mitochondrial complex I assembly/MCIA complex that comprises at least the core subunits TMEM126B, NDUFAF1, ECSIT and ACAD9 and complement subunits such as COA1 and TMEM186. Interacts with ECSIT. Interacts with ACAD9. At early stages of complex I assembly, it is found in intermediate subcomplexes that contain different subunits including NDUFB6, NDUFA6, NDUFA9, NDUFS3, NDUFS7, ND1, ND2 and ND3. Interacts with TMEM70 and TMEM242.

The protein localises to the mitochondrion. It localises to the mitochondrion matrix. In terms of biological role, as part of the MCIA complex, involved in the assembly of the mitochondrial complex I. The chain is Complex I intermediate-associated protein 30, mitochondrial from Pan troglodytes (Chimpanzee).